The sequence spans 239 residues: Purine nucleoside phosphorylase DeoD-type (239 aa).

Position 5 (His5) interacts with a purine D-ribonucleoside. Residues Gly21, Arg25, Arg44, and 88-91 contribute to the phosphate site; that span reads RVGS. A purine D-ribonucleoside-binding positions include 180–182 and 204–205; these read EME and SD. The Proton donor role is filled by Asp205.

This sequence belongs to the PNP/UDP phosphorylase family. As to quaternary structure, homohexamer; trimer of homodimers.

It catalyses the reaction a purine D-ribonucleoside + phosphate = a purine nucleobase + alpha-D-ribose 1-phosphate. The enzyme catalyses a purine 2'-deoxy-D-ribonucleoside + phosphate = a purine nucleobase + 2-deoxy-alpha-D-ribose 1-phosphate. In terms of biological role, catalyzes the reversible phosphorolytic breakdown of the N-glycosidic bond in the beta-(deoxy)ribonucleoside molecules, with the formation of the corresponding free purine bases and pentose-1-phosphate. The polypeptide is Purine nucleoside phosphorylase DeoD-type (Erwinia tasmaniensis (strain DSM 17950 / CFBP 7177 / CIP 109463 / NCPPB 4357 / Et1/99)).